We begin with the raw amino-acid sequence, 279 residues long: NADPH-dependent 7-cyano-7-deazaguanine reductase (279 aa).

Substrate is bound at residue 86–88 (IES). 88 to 89 (SK) contacts NADPH. The active-site Thioimide intermediate is cysteine 187. Aspartate 194 acts as the Proton donor in catalysis. Residue 226 to 227 (HE) participates in substrate binding. An NADPH-binding site is contributed by 255 to 256 (RG).

Belongs to the GTP cyclohydrolase I family. QueF type 2 subfamily. Homodimer.

The protein localises to the cytoplasm. The catalysed reaction is 7-aminomethyl-7-carbaguanine + 2 NADP(+) = 7-cyano-7-deazaguanine + 2 NADPH + 3 H(+). It participates in tRNA modification; tRNA-queuosine biosynthesis. Functionally, catalyzes the NADPH-dependent reduction of 7-cyano-7-deazaguanine (preQ0) to 7-aminomethyl-7-deazaguanine (preQ1). The chain is NADPH-dependent 7-cyano-7-deazaguanine reductase from Actinobacillus pleuropneumoniae serotype 7 (strain AP76).